The sequence spans 239 residues: NAD-dependent protein deacylase (239 aa).

Residues 1 to 234 (MENLNIVTLT…KKVYDYLREK (234 aa)) form the Deacetylase sirtuin-type domain. NAD(+)-binding positions include 11–30 (GAGI…DGLW) and 89–92 (QNVD). The active-site Proton acceptor is the His-107. Positions 115, 118, 136, and 139 each coordinate Zn(2+). Residues 176–178 (GTS), 202–204 (NPE), and Ala-220 each bind NAD(+).

This sequence belongs to the sirtuin family. Class III subfamily. Requires Zn(2+) as cofactor.

The protein localises to the cytoplasm. It catalyses the reaction N(6)-acetyl-L-lysyl-[protein] + NAD(+) + H2O = 2''-O-acetyl-ADP-D-ribose + nicotinamide + L-lysyl-[protein]. In terms of biological role, NAD-dependent protein deacetylase which modulates the activities of several proteins which are inactive in their acetylated form. The chain is NAD-dependent protein deacylase from Aquifex aeolicus (strain VF5).